A 249-amino-acid chain; its full sequence is DNA repair protein RecO (249 aa).

The protein belongs to the RecO family.

Involved in DNA repair and RecF pathway recombination. This is DNA repair protein RecO from Rhodopseudomonas palustris (strain HaA2).